Reading from the N-terminus, the 196-residue chain is Imidazole glycerol phosphate synthase subunit HisH (196 aa).

The Glutamine amidotransferase type-1 domain occupies 2–196; sequence KATLINYGVG…LRNFYSWVKR (195 aa). C76 acts as the Nucleophile in catalysis. Active-site residues include H175 and E177.

In terms of assembly, heterodimer of HisH and HisF.

The protein resides in the cytoplasm. The catalysed reaction is 5-[(5-phospho-1-deoxy-D-ribulos-1-ylimino)methylamino]-1-(5-phospho-beta-D-ribosyl)imidazole-4-carboxamide + L-glutamine = D-erythro-1-(imidazol-4-yl)glycerol 3-phosphate + 5-amino-1-(5-phospho-beta-D-ribosyl)imidazole-4-carboxamide + L-glutamate + H(+). It carries out the reaction L-glutamine + H2O = L-glutamate + NH4(+). Its pathway is amino-acid biosynthesis; L-histidine biosynthesis; L-histidine from 5-phospho-alpha-D-ribose 1-diphosphate: step 5/9. Its function is as follows. IGPS catalyzes the conversion of PRFAR and glutamine to IGP, AICAR and glutamate. The HisH subunit catalyzes the hydrolysis of glutamine to glutamate and ammonia as part of the synthesis of IGP and AICAR. The resulting ammonia molecule is channeled to the active site of HisF. This Sulfurisphaera tokodaii (strain DSM 16993 / JCM 10545 / NBRC 100140 / 7) (Sulfolobus tokodaii) protein is Imidazole glycerol phosphate synthase subunit HisH.